The primary structure comprises 70 residues: SPbeta prophage-derived uncharacterized protein YorZ (70 aa).

In Bacillus subtilis (strain 168), this protein is SPbeta prophage-derived uncharacterized protein YorZ (yorZ).